A 317-amino-acid polypeptide reads, in one-letter code: Zinc transporter ZIP3 (317 aa).

Over 1 to 3 (MTK) the chain is Extracellular. A helical membrane pass occupies residues 4–24 (LLVAKVLCMVGVFFFMLLGSL). Residues 25-42 (LPVKVIEADLEKAHRSKK) lie on the Cytoplasmic side of the membrane. Residues 43–63 (VLSLCNTFGGGVFLATCFNAL) form a helical membrane-spanning segment. At 64–85 (LPAVRDKLQQVLSLGHISTDYP) the chain is on the extracellular side. Residues 86-106 (LAETLMMVGFFLTVFVEQLVL) form a helical membrane-spanning segment. The Cytoplasmic portion of the chain corresponds to 107-172 (TFRRERPPFI…RELGRPGPLR (66 aa)). Residues Ser125 and Ser129 each carry the phosphoserine modification. The chain crosses the membrane as a helical span at residues 173-193 (LLSLVFALSAHSVFEGLALGL). Topologically, residues 194 to 199 (QEEGER) are extracellular. The helical transmembrane segment at 200–220 (VVSLFVGVAIHETLVAVALGI) threads the bilayer. Residues 221-232 (SMARSAVPLRDA) are Cytoplasmic-facing. The helical transmembrane segment at 233–253 (AKLAVTVSAMIPVGIGLGLGI) threads the bilayer. At 254–265 (ESARSVASSVAS) the chain is on the extracellular side. A helical transmembrane segment spans residues 266-286 (ALLQGLAGGTFLFVTFLEILA). The Cytoplasmic segment spans residues 287–294 (KELEERSE). The helical transmembrane segment at 295 to 315 (QLLKVLFLVLGYAVLAGMVFL) threads the bilayer. Topologically, residues 316–317 (KW) are extracellular.

Belongs to the ZIP transporter (TC 2.A.5) family. In terms of tissue distribution, highly expressed in the testes. Highly expressed in dentate gyrus granule cells of the hippocampus. Expressed in the mammary gland.

The protein localises to the cell membrane. The protein resides in the apical cell membrane. It carries out the reaction Zn(2+)(in) = Zn(2+)(out). Transporter for the divalent cation Zn(2+). Mediates the influx of Zn(2+) into cells from extracellular space. Controls Zn(2+) accumulation into dentate gyrus granule cells in the hippocampus. Mediates Zn(2+) reuptake from the secreted milk within the alveolar lumen. The chain is Zinc transporter ZIP3 (Slc39a3) from Mus musculus (Mouse).